The following is a 192-amino-acid chain: Protein GrpE (192 aa).

The interval 1 to 34 (MSSKEQKTPNEQVSEEMENTAEQQVEATQETGEC) is disordered. Over residues 20 to 31 (TAEQQVEATQET) the composition is skewed to polar residues.

The protein belongs to the GrpE family. In terms of assembly, homodimer.

It is found in the cytoplasm. In terms of biological role, participates actively in the response to hyperosmotic and heat shock by preventing the aggregation of stress-denatured proteins, in association with DnaK and GrpE. It is the nucleotide exchange factor for DnaK and may function as a thermosensor. Unfolded proteins bind initially to DnaJ; upon interaction with the DnaJ-bound protein, DnaK hydrolyzes its bound ATP, resulting in the formation of a stable complex. GrpE releases ADP from DnaK; ATP binding to DnaK triggers the release of the substrate protein, thus completing the reaction cycle. Several rounds of ATP-dependent interactions between DnaJ, DnaK and GrpE are required for fully efficient folding. The protein is Protein GrpE of Yersinia pseudotuberculosis serotype I (strain IP32953).